A 101-amino-acid chain; its full sequence is ATP-dependent Clp protease adapter protein ClpS (101 aa).

The protein belongs to the ClpS family. Binds to the N-terminal domain of the chaperone ClpA.

Its function is as follows. Involved in the modulation of the specificity of the ClpAP-mediated ATP-dependent protein degradation. This is ATP-dependent Clp protease adapter protein ClpS from Corynebacterium jeikeium (strain K411).